The chain runs to 343 residues: Small ribosomal subunit biogenesis GTPase RsgA (343 aa).

The interval 1–32 (MAKRRLSKRQVDRIRERQSQRLDTSVAAPDGK) is disordered. The segment covering 9–20 (RQVDRIRERQSQ) has biased composition (basic and acidic residues). Residues 109–273 (YGKLKPVAAN…CIDSPGIREF (165 aa)) enclose the CP-type G domain. GTP is bound by residues 156–159 (NKLD) and 215–223 (GQSGVGKSS). Positions 297, 302, 304, and 310 each coordinate Zn(2+).

This sequence belongs to the TRAFAC class YlqF/YawG GTPase family. RsgA subfamily. In terms of assembly, monomer. Associates with 30S ribosomal subunit, binds 16S rRNA. Zn(2+) serves as cofactor.

It localises to the cytoplasm. In terms of biological role, one of several proteins that assist in the late maturation steps of the functional core of the 30S ribosomal subunit. Helps release RbfA from mature subunits. May play a role in the assembly of ribosomal proteins into the subunit. Circularly permuted GTPase that catalyzes slow GTP hydrolysis, GTPase activity is stimulated by the 30S ribosomal subunit. The chain is Small ribosomal subunit biogenesis GTPase RsgA from Saccharophagus degradans (strain 2-40 / ATCC 43961 / DSM 17024).